We begin with the raw amino-acid sequence, 301 residues long: Homoserine kinase (301 aa).

81-91 (RPSSGLGSSAA) is a binding site for ATP.

It belongs to the GHMP kinase family. Homoserine kinase subfamily.

The protein resides in the cytoplasm. It catalyses the reaction L-homoserine + ATP = O-phospho-L-homoserine + ADP + H(+). Its pathway is amino-acid biosynthesis; L-threonine biosynthesis; L-threonine from L-aspartate: step 4/5. Its function is as follows. Catalyzes the ATP-dependent phosphorylation of L-homoserine to L-homoserine phosphate. This is Homoserine kinase from Halobacterium salinarum (strain ATCC 29341 / DSM 671 / R1).